A 24-amino-acid chain; its full sequence is Sperm protamine P3 (24 aa).

The interval Arg1–Arg24 is disordered.

As to expression, testis.

Its subcellular location is the nucleus. It is found in the chromosome. Functionally, protamines substitute for histones in the chromatin of sperm during the haploid phase of spermatogenesis. They compact sperm DNA into a highly condensed, stable and inactive complex. This is Sperm protamine P3 from Octopus vulgaris (Common octopus).